The primary structure comprises 138 residues: MRTLWIMAVLLVGVEGHLWQFREMIKEATGKEPLTTYLFYACYCGWGGRGEPKDATDRCCFVHDCCYGKLTACSPKLDIYSYSQKNEDIVCGGGTECEKQICECDKAAAICFLDNLGTYNKEYNNYSKSRCIEESPKC.

An N-terminal signal peptide occupies residues 1–16 (MRTLWIMAVLLVGVEG). 7 cysteine pairs are disulfide-bonded: cysteine 42-cysteine 131, cysteine 44-cysteine 60, cysteine 59-cysteine 111, cysteine 65-cysteine 138, cysteine 66-cysteine 104, cysteine 73-cysteine 97, and cysteine 91-cysteine 102. Residues tyrosine 43, glycine 45, and glycine 47 each coordinate Ca(2+). Residue histidine 63 is part of the active site. Aspartate 64 provides a ligand contact to Ca(2+). The active site involves aspartate 105.

It belongs to the phospholipase A2 family. Group II subfamily. D49 sub-subfamily. As to quaternary structure, monomer. Ca(2+) serves as cofactor. Expressed by the venom gland.

The protein localises to the secreted. It carries out the reaction a 1,2-diacyl-sn-glycero-3-phosphocholine + H2O = a 1-acyl-sn-glycero-3-phosphocholine + a fatty acid + H(+). In terms of biological role, snake venom phospholipase A2 (PLA2) that displays edema-inducing activities, exhibits indirect hemolytic activity, and inhibits ADP-induced platelet aggregation. PLA2 catalyzes the calcium-dependent hydrolysis of the 2-acyl groups in 3-sn-phosphoglycerides. The sequence is that of Acidic phospholipase A2 jerdoxin from Protobothrops jerdonii (Jerdon's pitviper).